We begin with the raw amino-acid sequence, 263 residues long: 3-methyl-2-oxobutanoate hydroxymethyltransferase (263 aa).

Mg(2+)-binding residues include aspartate 45 and aspartate 84. Residues 45–46 (DS), aspartate 84, and lysine 112 contribute to the 3-methyl-2-oxobutanoate site. Mg(2+) is bound at residue glutamate 114. The active-site Proton acceptor is the glutamate 180.

Belongs to the PanB family. As to quaternary structure, homodecamer; pentamer of dimers. The cofactor is Mg(2+).

It localises to the cytoplasm. It catalyses the reaction 3-methyl-2-oxobutanoate + (6R)-5,10-methylene-5,6,7,8-tetrahydrofolate + H2O = 2-dehydropantoate + (6S)-5,6,7,8-tetrahydrofolate. It functions in the pathway cofactor biosynthesis; (R)-pantothenate biosynthesis; (R)-pantoate from 3-methyl-2-oxobutanoate: step 1/2. Its function is as follows. Catalyzes the reversible reaction in which hydroxymethyl group from 5,10-methylenetetrahydrofolate is transferred onto alpha-ketoisovalerate to form ketopantoate. The polypeptide is 3-methyl-2-oxobutanoate hydroxymethyltransferase (Klebsiella pneumoniae subsp. pneumoniae (strain ATCC 700721 / MGH 78578)).